A 293-amino-acid chain; its full sequence is 4-hydroxy-tetrahydrodipicolinate synthase (293 aa).

Position 47 (T47) interacts with pyruvate. Residue Y136 is the Proton donor/acceptor of the active site. K164 serves as the catalytic Schiff-base intermediate with substrate. I206 is a binding site for pyruvate.

The protein belongs to the DapA family. As to quaternary structure, homotetramer; dimer of dimers.

It is found in the cytoplasm. It carries out the reaction L-aspartate 4-semialdehyde + pyruvate = (2S,4S)-4-hydroxy-2,3,4,5-tetrahydrodipicolinate + H2O + H(+). It participates in amino-acid biosynthesis; L-lysine biosynthesis via DAP pathway; (S)-tetrahydrodipicolinate from L-aspartate: step 3/4. Its function is as follows. Catalyzes the condensation of (S)-aspartate-beta-semialdehyde [(S)-ASA] and pyruvate to 4-hydroxy-tetrahydrodipicolinate (HTPA). The chain is 4-hydroxy-tetrahydrodipicolinate synthase from Listeria monocytogenes serotype 4b (strain CLIP80459).